The sequence spans 137 residues: Large-conductance mechanosensitive channel (137 aa).

The next 2 helical transmembrane spans lie at 15–35 (VDLAVGFILGGAFGTIVTSLV) and 81–101 (GKFINAVISFVIMALALFFVI).

The protein belongs to the MscL family. Homopentamer.

The protein localises to the cell inner membrane. Channel that opens in response to stretch forces in the membrane lipid bilayer. May participate in the regulation of osmotic pressure changes within the cell. The polypeptide is Large-conductance mechanosensitive channel (Hyphomonas neptunium (strain ATCC 15444)).